A 361-amino-acid chain; its full sequence is MASRSLNGDSDIVKPRKIALVTGITGQDGSYLTEFLLEKGYEVHGLIRRSSNFNTQRLNHIYVDPHNVNKALMKLHYGDLSDASSLRRWLDVIKPDEVYNLAAQSHVAVSFEIPDYTADVVATGALRLLEAVRSHNIDNGRAIKYYQAGSSEMFGSTPPPQSETTPFHPRSPYAASKCAAHWYTVNYREAYGLYACNGILFNHESPRRGENFVTRKITRALGRIKVGLQTKLFLGNIQASRDWGFAGDYVEAMWLMLQQEKPDDYVVATEESHTVKEFLDVSFGYVGLNWKDHVEIDKRYFRPTEVDNLKGDASKAKEMLGWKPKVGFEKLVKMMVDEDLELAKREKVLADAGYMDAQQQP.

Residues 23-28, 79-80, 101-105, and Y116 contribute to the NADP(+) site; these read GITGQD, DL, and LAAQS. S150 is a catalytic residue. Catalysis depends on nucleophile residues E152 and Y173. K177, H203, and R208 together coordinate NADP(+).

The protein belongs to the NAD(P)-dependent epimerase/dehydratase family. GDP-mannose 4,6-dehydratase subfamily. As to quaternary structure, homotetramer. Requires NADP(+) as cofactor. In terms of tissue distribution, expressed in roots,stipules and pollen just before anthesis. Primarily localized to the root meristem and columella root cap. Not expressed in emerging lateral roots.

It carries out the reaction GDP-alpha-D-mannose = GDP-4-dehydro-alpha-D-rhamnose + H2O. It functions in the pathway nucleotide-sugar biosynthesis; GDP-L-fucose biosynthesis via de novo pathway; GDP-L-fucose from GDP-alpha-D-mannose: step 1/2. Catalyzes the conversion of GDP-D-mannose to GDP-4-dehydro-6-deoxy-D-mannose. The chain is GDP-mannose 4,6 dehydratase 1 (GMD1) from Arabidopsis thaliana (Mouse-ear cress).